The following is a 306-amino-acid chain: tRNA dimethylallyltransferase (306 aa).

Residue 14–21 (GPTAAGKS) participates in ATP binding. Residue 16–21 (TAAGKS) participates in substrate binding. Residues 39 to 42 (DSRL) are interaction with substrate tRNA.

Belongs to the IPP transferase family. Monomer. The cofactor is Mg(2+).

The catalysed reaction is adenosine(37) in tRNA + dimethylallyl diphosphate = N(6)-dimethylallyladenosine(37) in tRNA + diphosphate. Its function is as follows. Catalyzes the transfer of a dimethylallyl group onto the adenine at position 37 in tRNAs that read codons beginning with uridine, leading to the formation of N6-(dimethylallyl)adenosine (i(6)A). The chain is tRNA dimethylallyltransferase from Synechococcus sp. (strain ATCC 27144 / PCC 6301 / SAUG 1402/1) (Anacystis nidulans).